The chain runs to 218 residues: CTD kinase subunit gamma (218 aa).

A CID domain is found at 2–138; the sequence is DPFEGRMTFL…DAMATVEAHE (137 aa). Residues 137–157 are disordered; the sequence is HEQASKSGDTSTSGAISKNDI. A compositionally biased stretch (polar residues) spans 141-152; the sequence is SKSGDTSTSGAI.

It belongs to the CTK3 family. CTDK-I consists of three subunits, ctk1/lsk1, ctk2/lsc1 and ctk3 (also called alpha, beta and gamma).

The protein localises to the cytoplasm. Its subcellular location is the nucleus. Its function is as follows. Subunit of the CTDK-I complex, which hyperphosphorylates the C-terminal heptapeptide repeat domain (CTD) of the largest RNA polymerase II subunit. As part of the CTDK-I complex, involved in RNA polymerase II transcriptional elongation and pre-mRNA 3'-end processing. Together with ctk2, required for ctk1/lsk1 CTD kinase activation. This Schizosaccharomyces pombe (strain 972 / ATCC 24843) (Fission yeast) protein is CTD kinase subunit gamma.